A 510-amino-acid chain; its full sequence is Probable RNA-binding protein 46 (510 aa).

Positions 23 to 42 (ENGQRKFGGPPPGWEGPPPP) are disordered. The segment covering 31–42 (GPPPGWEGPPPP) has biased composition (pro residues). 3 consecutive RRM domains span residues 45 to 123 (REVF…VSLD), 125 to 207 (CRLF…WAEP), and 220 to 292 (RVLY…LAKP).

As to expression, expressed in the testis and ovary.

It is found in the cytoplasm. Its function is as follows. Essential for male and female fertility, playing a crucial role in regulating germ cell development by ensuring the proper progression of meiosis prophase I. This Danio rerio (Zebrafish) protein is Probable RNA-binding protein 46 (rbm46).